A 263-amino-acid chain; its full sequence is 3-methyl-2-oxobutanoate hydroxymethyltransferase (263 aa).

Mg(2+) contacts are provided by Asp45 and Asp84. 3-methyl-2-oxobutanoate contacts are provided by residues 45 to 46, Asp84, and Lys112; that span reads DS. Glu114 is a binding site for Mg(2+). Glu180 serves as the catalytic Proton acceptor.

It belongs to the PanB family. In terms of assembly, homodecamer; pentamer of dimers. It depends on Mg(2+) as a cofactor.

Its subcellular location is the cytoplasm. The enzyme catalyses 3-methyl-2-oxobutanoate + (6R)-5,10-methylene-5,6,7,8-tetrahydrofolate + H2O = 2-dehydropantoate + (6S)-5,6,7,8-tetrahydrofolate. It functions in the pathway cofactor biosynthesis; (R)-pantothenate biosynthesis; (R)-pantoate from 3-methyl-2-oxobutanoate: step 1/2. Catalyzes the reversible reaction in which hydroxymethyl group from 5,10-methylenetetrahydrofolate is transferred onto alpha-ketoisovalerate to form ketopantoate. The chain is 3-methyl-2-oxobutanoate hydroxymethyltransferase from Salmonella enteritidis PT4 (strain P125109).